The sequence spans 536 residues: Casein kinase I homolog RAG8 (536 aa).

Over residues 26–42 (HSTQVLHGSGQHGMQPS) the composition is skewed to polar residues. The segment at 26–68 (HSTQVLHGSGQHGMQPSGNNVLNGLANGATGLQSSASSTSTRD) is disordered. Positions 43-65 (GNNVLNGLANGATGLQSSASSTS) are enriched in low complexity. Positions 77-361 (YKIGKKIGEG…QKLDGEYDWM (285 aa)) constitute a Protein kinase domain. ATP is bound by residues 83-91 (IGEGSFGVL) and Lys106. Asp196 functions as the Proton acceptor in the catalytic mechanism. 2 stretches are compositionally biased toward polar residues: residues 407–420 (NNLNGSNVPLQSHS) and 427–436 (DLTQGVSNAP). Residues 407–524 (NNLNGSNVPL…NGKVQVADSN (118 aa)) are disordered. Low complexity-rich tracts occupy residues 437–453 (QQPQQIMSQQQYQQHTQ) and 463–514 (AYKQ…NQPQ). 2 S-palmitoyl cysteine lipidation sites follow: Cys535 and Cys536.

It belongs to the protein kinase superfamily. CK1 Ser/Thr protein kinase family. Casein kinase I subfamily.

It catalyses the reaction L-seryl-[protein] + ATP = O-phospho-L-seryl-[protein] + ADP + H(+). The catalysed reaction is L-threonyl-[protein] + ATP = O-phospho-L-threonyl-[protein] + ADP + H(+). Functionally, casein kinases are operationally defined by their preferential utilization of acidic proteins such as caseins as substrates. The sequence is that of Casein kinase I homolog RAG8 (RAG8) from Kluyveromyces lactis (strain ATCC 8585 / CBS 2359 / DSM 70799 / NBRC 1267 / NRRL Y-1140 / WM37) (Yeast).